The primary structure comprises 239 residues: Mannose-P-dolichol utilization defect 1 protein homolog 1 (239 aa).

A run of 6 helical transmembrane segments spans residues 25-45 (CLLP…SMTV), 62-82 (LSVV…AYCL), 91-111 (FGEL…IYYF), 123-143 (AILY…PFLF), 174-194 (LSFL…FTSI), and 202-222 (MLLG…QILL). The region spanning 27 to 93 (LPLISKLLGY…KDLPFSAFGE (67 aa)) is the PQ-loop 1 domain. The 56-residue stretch at 150 to 205 (KHLIFLSARIPQIWKNFRNKSTGQLSFLTCLMNFGGALARVFTSIQEKAPLSMLLG) folds into the PQ-loop 2 domain.

This sequence belongs to the MPDU1 (TC 2.A.43.3) family.

The protein resides in the membrane. The protein is Mannose-P-dolichol utilization defect 1 protein homolog 1 of Arabidopsis thaliana (Mouse-ear cress).